Reading from the N-terminus, the 411-residue chain is 2,3-bisphosphoglycerate-independent phosphoglycerate mutase (411 aa).

The protein belongs to the BPG-independent phosphoglycerate mutase family. A-PGAM subfamily. In terms of assembly, homotetramer. Mg(2+) is required as a cofactor.

The enzyme catalyses (2R)-2-phosphoglycerate = (2R)-3-phosphoglycerate. Its pathway is carbohydrate degradation; glycolysis; pyruvate from D-glyceraldehyde 3-phosphate: step 3/5. With respect to regulation, inhibited to approximately 20% by EDTA. In terms of biological role, catalyzes the interconversion of 2-phosphoglycerate and 3-phosphoglycerate. In Pyrococcus furiosus (strain ATCC 43587 / DSM 3638 / JCM 8422 / Vc1), this protein is 2,3-bisphosphoglycerate-independent phosphoglycerate mutase (apgM).